A 341-amino-acid chain; its full sequence is L-threonine 3-dehydrogenase (341 aa).

Residue cysteine 38 participates in Zn(2+) binding. Active-site charge relay system residues include threonine 40 and histidine 43. 6 residues coordinate Zn(2+): histidine 63, glutamate 64, cysteine 93, cysteine 96, cysteine 99, and cysteine 107. NAD(+) is bound by residues isoleucine 175, aspartate 195, arginine 200, 262-264 (LGI), and 286-287 (IY).

It belongs to the zinc-containing alcohol dehydrogenase family. As to quaternary structure, homotetramer. Zn(2+) is required as a cofactor.

It is found in the cytoplasm. The catalysed reaction is L-threonine + NAD(+) = (2S)-2-amino-3-oxobutanoate + NADH + H(+). Its pathway is amino-acid degradation; L-threonine degradation via oxydo-reductase pathway; glycine from L-threonine: step 1/2. Catalyzes the NAD(+)-dependent oxidation of L-threonine to 2-amino-3-ketobutyrate. This Shewanella pealeana (strain ATCC 700345 / ANG-SQ1) protein is L-threonine 3-dehydrogenase.